Reading from the N-terminus, the 410-residue chain is Acetate kinase (410 aa).

A Mg(2+)-binding site is contributed by asparagine 7. Lysine 14 is an ATP binding site. Arginine 98 contacts substrate. The Proton donor/acceptor role is filled by aspartate 155. Residues 215–219 (HLGNG), 290–292 (DMR), and 338–342 (GIGEN) each bind ATP. Residue glutamate 392 coordinates Mg(2+).

This sequence belongs to the acetokinase family. In terms of assembly, homodimer. It depends on Mg(2+) as a cofactor. The cofactor is Mn(2+).

Its subcellular location is the cytoplasm. The catalysed reaction is acetate + ATP = acetyl phosphate + ADP. Its pathway is metabolic intermediate biosynthesis; acetyl-CoA biosynthesis; acetyl-CoA from acetate: step 1/2. Its function is as follows. Catalyzes the formation of acetyl phosphate from acetate and ATP. Can also catalyze the reverse reaction. The chain is Acetate kinase from Kocuria rhizophila (strain ATCC 9341 / DSM 348 / NBRC 103217 / DC2201).